The following is a 146-amino-acid chain: Basic phospholipase A2 73 (146 aa).

A signal peptide spans 1–19 (MYPAHLLVLLAVCVSLLGA). The propeptide occupies 20–27 (ASIPPLPL). 7 cysteine pairs are disulfide-bonded: cysteine 38–cysteine 98, cysteine 54–cysteine 145, cysteine 56–cysteine 72, cysteine 71–cysteine 126, cysteine 78–cysteine 119, cysteine 87–cysteine 112, and cysteine 105–cysteine 117. Tyrosine 55, glycine 57, and glycine 59 together coordinate Ca(2+). The active site involves histidine 75. Aspartate 76 is a binding site for Ca(2+). Residue aspartate 120 is part of the active site.

It belongs to the phospholipase A2 family. Group I subfamily. D49 sub-subfamily. Ca(2+) serves as cofactor. In terms of tissue distribution, expressed by the venom gland.

It localises to the secreted. It carries out the reaction a 1,2-diacyl-sn-glycero-3-phosphocholine + H2O = a 1-acyl-sn-glycero-3-phosphocholine + a fatty acid + H(+). Snake venom phospholipase A2 (PLA2) that inhibits neuromuscular transmission by blocking acetylcholine release from the nerve termini. PLA2 catalyzes the calcium-dependent hydrolysis of the 2-acyl groups in 3-sn-phosphoglycerides. The polypeptide is Basic phospholipase A2 73 (Hydrophis hardwickii (Hardwick's spine-bellied seasnake)).